A 206-amino-acid polypeptide reads, in one-letter code: Large ribosomal subunit protein uL4 (206 aa).

The tract at residues 63-94 (MYKQKGTGRARHHSARAPQFRGGGKAHGPVVR) is disordered. The span at 64–77 (YKQKGTGRARHHSA) shows a compositional bias: basic residues.

The protein belongs to the universal ribosomal protein uL4 family. In terms of assembly, part of the 50S ribosomal subunit.

In terms of biological role, one of the primary rRNA binding proteins, this protein initially binds near the 5'-end of the 23S rRNA. It is important during the early stages of 50S assembly. It makes multiple contacts with different domains of the 23S rRNA in the assembled 50S subunit and ribosome. Forms part of the polypeptide exit tunnel. The protein is Large ribosomal subunit protein uL4 of Mesorhizobium japonicum (strain LMG 29417 / CECT 9101 / MAFF 303099) (Mesorhizobium loti (strain MAFF 303099)).